The following is a 285-amino-acid chain: Probable cobalamin biosynthesis protein CobD (285 aa).

4 consecutive transmembrane segments (helical) span residues 10-32, 45-67, 145-167, and 266-283; these read LIDLMFGEPPAIIHPVVGFGKVI, YLDFLVGAISSLVVIGLAFILSH, VIAPLFYYLIFGLPGAVVYRAVN, and VYWIIVVEFLLIVAIILY.

This sequence belongs to the CobD/CbiB family.

It localises to the cell membrane. Its pathway is cofactor biosynthesis; adenosylcobalamin biosynthesis. Its function is as follows. Converts cobyric acid to cobinamide by the addition of aminopropanol on the F carboxylic group. The sequence is that of Probable cobalamin biosynthesis protein CobD from Pyrococcus furiosus (strain ATCC 43587 / DSM 3638 / JCM 8422 / Vc1).